Here is a 208-residue protein sequence, read N- to C-terminus: MGEPAFTSFPSPPVLGKLKRNMMPWALQKKREIHMAKAHRRRAARSALPMRLTSCIFRRPVTRIRSHPDNQVRRRKGDEHLEKPQQLCAYRRLQALQPCSSQGEGSSPLHLESVLSILAPGTAGESLDRAGAERVRIPLEPTPGRFPAVAGGPTPGMGCQLPPPLSGQLVTPADIRRQARRVKKARERLAKALQADRLARQAEMLTCR.

This sequence belongs to the MBD3L family.

In Homo sapiens (Human), this protein is Methyl-CpG-binding domain protein 3-like 4 (MBD3L4).